Reading from the N-terminus, the 343-residue chain is Probable potassium channel protein 2 (343 aa).

Residues 1–7 are Cytoplasmic-facing; it reads METSKKL. A helical transmembrane segment spans residues 8-28; the sequence is VIVAVLSITLILTYAYLISII. Residues 29-61 are Extracellular-facing; that stretch reads EGVDYFTALYFSVITITTTGYGDFTPKTFLGRT. Positions 46–51 match the Selectivity filter motif; the sequence is TTGYGD. A helical membrane pass occupies residues 62–82; sequence LTVVYLCVGVGIVMYLFSLIA. Over 83–343 the chain is Cytoplasmic; the sequence is EFIVEGKFEE…NLVKKKKKKL (261 aa). Residues 107 to 227 form the RCK N-terminal domain; it reads KDHYIICGYG…KIAGANRVVS (121 aa). Positions 253-338 constitute an RCK C-terminal domain; it reads IKIAKDEYEE…LKYLENLVKK (86 aa).

It localises to the cell membrane. Probable potassium channel protein. The protein is Probable potassium channel protein 2 of Methanocaldococcus jannaschii (strain ATCC 43067 / DSM 2661 / JAL-1 / JCM 10045 / NBRC 100440) (Methanococcus jannaschii).